We begin with the raw amino-acid sequence, 350 residues long: Hydroxymethylglutaryl-CoA synthase (350 aa).

Catalysis depends on E83, which acts as the Proton donor/acceptor. The active-site Acyl-thioester intermediate is C115. Residues C115 and T156 each coordinate (3S)-3-hydroxy-3-methylglutaryl-CoA. R204 provides a ligand contact to CoA. 2 residues coordinate (3S)-3-hydroxy-3-methylglutaryl-CoA: T206 and H239. The active-site Proton donor/acceptor is the H239. K244 provides a ligand contact to CoA. Residues N271 and S301 each contribute to the (3S)-3-hydroxy-3-methylglutaryl-CoA site.

The protein belongs to the thiolase-like superfamily. Archaeal HMG-CoA synthase family. Interacts with acetoacetyl-CoA thiolase that catalyzes the precedent step in the pathway and with a DUF35 protein. The acetoacetyl-CoA thiolase/HMG-CoA synthase complex channels the intermediate via a fused CoA-binding site, which allows for efficient coupling of the endergonic thiolase reaction with the exergonic HMGCS reaction.

The catalysed reaction is acetoacetyl-CoA + acetyl-CoA + H2O = (3S)-3-hydroxy-3-methylglutaryl-CoA + CoA + H(+). The protein operates within metabolic intermediate biosynthesis; (R)-mevalonate biosynthesis; (R)-mevalonate from acetyl-CoA: step 2/3. Its function is as follows. Catalyzes the condensation of acetyl-CoA with acetoacetyl-CoA to form 3-hydroxy-3-methylglutaryl-CoA (HMG-CoA). Functions in the mevalonate (MVA) pathway leading to isopentenyl diphosphate (IPP), a key precursor for the biosynthesis of isoprenoid compounds that are building blocks of archaeal membrane lipids. This Pyrococcus furiosus (strain ATCC 43587 / DSM 3638 / JCM 8422 / Vc1) protein is Hydroxymethylglutaryl-CoA synthase.